The following is a 424-amino-acid chain: Deoxyguanosinetriphosphate triphosphohydrolase-like protein (424 aa).

A disordered region spans residues 1-27 (MYPYSDADAFRRQPERAKSSQLRTSAV). The segment covering 8-18 (DAFRRQPERAK) has biased composition (basic and acidic residues). An HD domain is found at 67 to 217 (RLTHSLEVAQ…MDFSDDIAYS (151 aa)).

The protein belongs to the dGTPase family. Type 2 subfamily.

This is Deoxyguanosinetriphosphate triphosphohydrolase-like protein (dgt) from Corynebacterium glutamicum (strain ATCC 13032 / DSM 20300 / JCM 1318 / BCRC 11384 / CCUG 27702 / LMG 3730 / NBRC 12168 / NCIMB 10025 / NRRL B-2784 / 534).